The primary structure comprises 416 residues: Probable protein phosphatase 2C 49 (416 aa).

Residues 91 to 411 (RYGVTSVFGR…DNVSVVVVDL (321 aa)) form the PPM-type phosphatase domain. The Mn(2+) site is built by D131, G132, and D319. A compositionally biased stretch (pro residues) spans 343–360 (PPSPPGCSRPKAVLPPPA). Positions 343–368 (PPSPPGCSRPKAVLPPPAGASGGGGG) are disordered. A Mn(2+)-binding site is contributed by D402.

Belongs to the PP2C family. Mg(2+) serves as cofactor. Mn(2+) is required as a cofactor.

It carries out the reaction O-phospho-L-seryl-[protein] + H2O = L-seryl-[protein] + phosphate. The enzyme catalyses O-phospho-L-threonyl-[protein] + H2O = L-threonyl-[protein] + phosphate. This chain is Probable protein phosphatase 2C 49, found in Oryza sativa subsp. japonica (Rice).